The sequence spans 396 residues: tRNA(Met) cytidine acetate ligase (396 aa).

ATP contacts are provided by residues Ile9–His22, Gly103, Asn154, and Arg179.

Belongs to the TmcAL family.

Its subcellular location is the cytoplasm. It catalyses the reaction cytidine(34) in elongator tRNA(Met) + acetate + ATP = N(4)-acetylcytidine(34) in elongator tRNA(Met) + AMP + diphosphate. Functionally, catalyzes the formation of N(4)-acetylcytidine (ac(4)C) at the wobble position of elongator tRNA(Met), using acetate and ATP as substrates. First activates an acetate ion to form acetyladenylate (Ac-AMP) and then transfers the acetyl group to tRNA to form ac(4)C34. This chain is tRNA(Met) cytidine acetate ligase, found in Fusobacterium nucleatum subsp. nucleatum (strain ATCC 25586 / DSM 15643 / BCRC 10681 / CIP 101130 / JCM 8532 / KCTC 2640 / LMG 13131 / VPI 4355).